The following is a 453-amino-acid chain: Cytochrome P450 monooxygenase CYP2 (453 aa).

Residues 13 to 29 (MVITMLHGSSTYSLLAS) form a helical membrane-spanning segment. N-linked (GlcNAc...) asparagine glycosylation is present at asparagine 85. Cysteine 397 contributes to the heme binding site.

It belongs to the cytochrome P450 family. Requires heme as cofactor.

Its subcellular location is the membrane. It participates in secondary metabolite biosynthesis. In terms of biological role, cytochrome P450 monooxygenase; part of the gene cluster that mediates the biosynthesis of a tyrosine-derived cytochalasan acting as a fungal signal recognized by resistant rice plants and leads to avirulence in Pi33 resistant rice cultivars. The first step in the pathway is catalyzed by the hybrid PKS-NRPS ACE1, assisted by the enoyl reductase RAP1, that are responsible for fusion of the tyrosine precursor and the polyketide backbone. The polyketide synthase module (PKS) of ACE1 is responsible for the synthesis of the polyketide backbone and the downstream nonribosomal peptide synthetase (NRPS) amidates the carboxyl end of the polyketide with the tyrosine precursor. Because ACE1 lacks a designated enoylreductase (ER) domain, the required activity is provided the enoyl reductase RAP1. Reduction by the hydrolyase ORFZ, followed by dehydration and intra-molecular Diels-Alder cyclization by the Diels-Alderase ORF3 then yield the required isoindolone-fused macrocycle. A number of oxidative steps catalyzed by the tailoring enzymes identified within the cluster, including cytochrome P450 monooxygenases CYP1 to CYP4, the FAD-linked oxidoreductase OXR2 and the short-chain dehydrogenase/reductase OXR1, are further required to afford the final cytochalasans that confer avirulence and which have still to be identified. The monooxygenase CYP1 has been shown to be a site-selective C-18 hydroxylase whereas the function of CYP3 is the site-selective epoxidation of the C-6/C-7 olefin that is present in some intermediate compounds. Finally, SYN2 and RAP2 are not required for avirulence in Pi33 resistant rice cultivars. This is Cytochrome P450 monooxygenase CYP2 from Pyricularia oryzae (strain 70-15 / ATCC MYA-4617 / FGSC 8958) (Rice blast fungus).